Reading from the N-terminus, the 351-residue chain is Uroporphyrinogen decarboxylase (351 aa).

Substrate-binding positions include 26-30, D75, Y151, S206, and H321; that span reads RQAGR.

Belongs to the uroporphyrinogen decarboxylase family. In terms of assembly, homodimer.

Its subcellular location is the cytoplasm. It catalyses the reaction uroporphyrinogen III + 4 H(+) = coproporphyrinogen III + 4 CO2. It functions in the pathway porphyrin-containing compound metabolism; protoporphyrin-IX biosynthesis; coproporphyrinogen-III from 5-aminolevulinate: step 4/4. In terms of biological role, catalyzes the decarboxylation of four acetate groups of uroporphyrinogen-III to yield coproporphyrinogen-III. The sequence is that of Uroporphyrinogen decarboxylase from Koribacter versatilis (strain Ellin345).